Reading from the N-terminus, the 297-residue chain is N-acetylmuramic acid 6-phosphate etherase (297 aa).

The SIS domain maps to alanine 55–lysine 218. Glutamate 83 serves as the catalytic Proton donor. Glutamate 114 is a catalytic residue.

Belongs to the GCKR-like family. MurNAc-6-P etherase subfamily. Homodimer.

The enzyme catalyses N-acetyl-D-muramate 6-phosphate + H2O = N-acetyl-D-glucosamine 6-phosphate + (R)-lactate. It participates in amino-sugar metabolism; 1,6-anhydro-N-acetylmuramate degradation. Its pathway is amino-sugar metabolism; N-acetylmuramate degradation. It functions in the pathway cell wall biogenesis; peptidoglycan recycling. Functionally, specifically catalyzes the cleavage of the D-lactyl ether substituent of MurNAc 6-phosphate, producing GlcNAc 6-phosphate and D-lactate. Together with AnmK, is also required for the utilization of anhydro-N-acetylmuramic acid (anhMurNAc) either imported from the medium or derived from its own cell wall murein, and thus plays a role in cell wall recycling. The chain is N-acetylmuramic acid 6-phosphate etherase from Salmonella paratyphi B (strain ATCC BAA-1250 / SPB7).